A 213-amino-acid chain; its full sequence is 3,4-dihydroxy-2-butanone 4-phosphate synthase (213 aa).

Residues 37–38 (RE), Asp-42, 150–154 (RPGHT), and Glu-174 each bind D-ribulose 5-phosphate. Glu-38 is a Mg(2+) binding site. His-153 serves as a coordination point for Mg(2+).

It belongs to the DHBP synthase family. In terms of assembly, homodimer. Mg(2+) serves as cofactor. Requires Mn(2+) as cofactor.

The enzyme catalyses D-ribulose 5-phosphate = (2S)-2-hydroxy-3-oxobutyl phosphate + formate + H(+). It functions in the pathway cofactor biosynthesis; riboflavin biosynthesis; 2-hydroxy-3-oxobutyl phosphate from D-ribulose 5-phosphate: step 1/1. In terms of biological role, catalyzes the conversion of D-ribulose 5-phosphate to formate and 3,4-dihydroxy-2-butanone 4-phosphate. The polypeptide is 3,4-dihydroxy-2-butanone 4-phosphate synthase (Clostridium botulinum (strain Langeland / NCTC 10281 / Type F)).